We begin with the raw amino-acid sequence, 406 residues long: Flavohemoprotein (406 aa).

The Globin domain maps to V6–K144. H91 is a heme b binding site. Catalysis depends on charge relay system residues Y101 and E143. The reductase stretch occupies residues G155–K406. The FAD-binding FR-type domain maps to T158–D267. Residues Y196 and R212–S215 contribute to the FAD site. An NADP(+)-binding site is contributed by G280 to P285. L397–P400 lines the FAD pocket.

The protein belongs to the globin family. Two-domain flavohemoproteins subfamily. It in the C-terminal section; belongs to the flavoprotein pyridine nucleotide cytochrome reductase family. Requires heme b as cofactor. The cofactor is FAD.

The enzyme catalyses 2 nitric oxide + NADPH + 2 O2 = 2 nitrate + NADP(+) + H(+). It catalyses the reaction 2 nitric oxide + NADH + 2 O2 = 2 nitrate + NAD(+) + H(+). Its function is as follows. Is involved in NO detoxification in an aerobic process, termed nitric oxide dioxygenase (NOD) reaction that utilizes O(2) and NAD(P)H to convert NO to nitrate, which protects the bacterium from various noxious nitrogen compounds. Therefore, plays a central role in the inducible response to nitrosative stress. The sequence is that of Flavohemoprotein from Oceanobacillus iheyensis (strain DSM 14371 / CIP 107618 / JCM 11309 / KCTC 3954 / HTE831).